A 754-amino-acid polypeptide reads, in one-letter code: Protein NUCLEOLAR FACTOR 1 (754 aa).

3 disordered regions span residues methionine 1–valine 56, serine 69–threonine 166, and glutamate 390–serine 413. The segment covering serine 42–serine 52 has biased composition (acidic residues). Over residues methionine 80 to aspartate 93 the composition is skewed to basic and acidic residues. 2 stretches are compositionally biased toward acidic residues: residues threonine 94 to glycine 110 and aspartate 138 to valine 161. The segment covering serine 402 to serine 413 has biased composition (polar residues).

Belongs to the UTP25 family. Component of the ribosomal small subunit (SSU) processome composed of at least 40 protein subunits and snoRNA U3. Interacts with THAL in the nucleus. In terms of tissue distribution, preferentially expressed in differentiating cells in young tissues such as floral buds, ovules, embryos, secondary roots, pollen, young seedlings and vascular bundles. Observed ubiquitously.

The protein resides in the nucleus. It localises to the nucleolus. Functionally, DEAD-box RNA helicase-like protein required for pre-18S rRNA processing, specifically at sites A0, A1, and A2. Involved in the control of rRNA expression. Required for embryo development and female gametogenesis. This is Protein NUCLEOLAR FACTOR 1 from Arabidopsis thaliana (Mouse-ear cress).